Reading from the N-terminus, the 384-residue chain is NADH-quinone oxidoreductase subunit D 2 (384 aa).

It belongs to the complex I 49 kDa subunit family. As to quaternary structure, NDH-1 is composed of 14 different subunits. Subunits NuoB, C, D, E, F, and G constitute the peripheral sector of the complex.

It is found in the cell membrane. The catalysed reaction is a quinone + NADH + 5 H(+)(in) = a quinol + NAD(+) + 4 H(+)(out). NDH-1 shuttles electrons from NADH, via FMN and iron-sulfur (Fe-S) centers, to quinones in the respiratory chain. The immediate electron acceptor for the enzyme in this species is believed to be a menaquinone. Couples the redox reaction to proton translocation (for every two electrons transferred, four hydrogen ions are translocated across the cytoplasmic membrane), and thus conserves the redox energy in a proton gradient. In Symbiobacterium thermophilum (strain DSM 24528 / JCM 14929 / IAM 14863 / T), this protein is NADH-quinone oxidoreductase subunit D 2.